The following is a 204-amino-acid chain: Recombination protein RecR (204 aa).

The C4-type zinc finger occupies 63–78 (CRICFNVADSELCPIC). The Toprim domain occupies 86–181 (NKICVVEQPQ…KVTRLARGLP (96 aa)).

This sequence belongs to the RecR family.

In terms of biological role, may play a role in DNA repair. It seems to be involved in an RecBC-independent recombinational process of DNA repair. It may act with RecF and RecO. This chain is Recombination protein RecR, found in Dehalococcoides mccartyi (strain ATCC BAA-2266 / KCTC 15142 / 195) (Dehalococcoides ethenogenes (strain 195)).